Consider the following 1179-residue polypeptide: uncharacterized protein (1179 aa).

This is an uncharacterized protein from Ictaluridae (bullhead catfishes).